Consider the following 92-residue polypeptide: Small ribosomal subunit protein uS19 (92 aa).

It belongs to the universal ribosomal protein uS19 family.

In terms of biological role, protein S19 forms a complex with S13 that binds strongly to the 16S ribosomal RNA. The chain is Small ribosomal subunit protein uS19 from Vibrio campbellii (strain ATCC BAA-1116).